We begin with the raw amino-acid sequence, 57 residues long: Metallothionein (57 aa).

It belongs to the metallothionein superfamily. Type 14 family.

Functionally, this protein complexes cadmium, zinc and copper. The chain is Metallothionein (mtnA) from Thermostichus vulcanus (Synechococcus vulcanus).